The following is a 127-amino-acid chain: Probable tautomerase YusQ (127 aa).

The active-site Proton acceptor; via imino nitrogen is proline 2.

It belongs to the 4-oxalocrotonate tautomerase family.

This chain is Probable tautomerase YusQ (yusQ), found in Bacillus subtilis (strain 168).